The following is a 176-amino-acid chain: Large ribosomal subunit protein uL6 (176 aa).

This sequence belongs to the universal ribosomal protein uL6 family. In terms of assembly, part of the 50S ribosomal subunit.

Functionally, this protein binds to the 23S rRNA, and is important in its secondary structure. It is located near the subunit interface in the base of the L7/L12 stalk, and near the tRNA binding site of the peptidyltransferase center. The chain is Large ribosomal subunit protein uL6 from Burkholderia vietnamiensis (strain G4 / LMG 22486) (Burkholderia cepacia (strain R1808)).